The chain runs to 32 residues: Calcitonin (32 aa).

A disulfide bridge connects residues Cys1 and Cys7. Residue Pro32 is modified to Proline amide.

Belongs to the calcitonin family.

The protein resides in the secreted. Its function is as follows. Calcitonin is a peptide hormone that causes a rapid but short-lived drop in the level of calcium and phosphate in blood by promoting the incorporation of those ions in the bones. Calcitonin function is mediated by the calcitonin receptor/CALCR and the CALCR-RAMP2 (AMYR2) receptor complex. In Bos taurus (Bovine), this protein is Calcitonin (CALCA).